A 306-amino-acid chain; its full sequence is Ethylmalonyl-CoA decarboxylase (306 aa).

Position 216 is an N6-acetyllysine; alternate (Lys216). Lys216 is modified (N6-succinyllysine; alternate).

Belongs to the enoyl-CoA hydratase/isomerase family.

It is found in the cytoplasm. Its subcellular location is the cytosol. It catalyses the reaction (2S)-ethylmalonyl-CoA + H(+) = butanoyl-CoA + CO2. The enzyme catalyses (S)-methylmalonyl-CoA + H(+) = propanoyl-CoA + CO2. It carries out the reaction (2R)-ethylmalonyl-CoA + H(+) = butanoyl-CoA + CO2. Functionally, decarboxylates ethylmalonyl-CoA, a potentially toxic metabolite, to form butyryl-CoA, suggesting it might be involved in metabolite proofreading. Acts preferentially on (S)-ethylmalonyl-CoA but also has some activity on the (R)-isomer. Also has methylmalonyl-CoA decarboxylase activity at lower level. This Bos taurus (Bovine) protein is Ethylmalonyl-CoA decarboxylase (ECHDC1).